The chain runs to 316 residues: Ribosomal RNA small subunit methyltransferase H (316 aa).

S-adenosyl-L-methionine contacts are provided by residues 35–37 (AGH), Asp55, Phe84, Asp105, and Gln112.

This sequence belongs to the methyltransferase superfamily. RsmH family.

The protein resides in the cytoplasm. It carries out the reaction cytidine(1402) in 16S rRNA + S-adenosyl-L-methionine = N(4)-methylcytidine(1402) in 16S rRNA + S-adenosyl-L-homocysteine + H(+). Specifically methylates the N4 position of cytidine in position 1402 (C1402) of 16S rRNA. In Streptococcus mutans serotype c (strain ATCC 700610 / UA159), this protein is Ribosomal RNA small subunit methyltransferase H.